A 311-amino-acid polypeptide reads, in one-letter code: Pyrimidine-specific ribonucleoside hydrolase RihA (311 aa).

Residue histidine 240 is part of the active site.

It belongs to the IUNH family. RihA subfamily.

Its function is as follows. Hydrolyzes cytidine or uridine to ribose and cytosine or uracil, respectively. The protein is Pyrimidine-specific ribonucleoside hydrolase RihA of Klebsiella pneumoniae subsp. pneumoniae (strain ATCC 700721 / MGH 78578).